The following is a 35-amino-acid chain: Turripeptide gsp9a (35 aa).

2 positions are modified to 4-hydroxyproline: Pro3 and Pro4. 3 cysteine pairs are disulfide-bonded: Cys7–Cys22, Cys12–Cys26, and Cys18–Cys33. 2 positions are modified to 4-carboxyglutamate: Glu14 and Glu17.

In terms of tissue distribution, expressed by the venom duct.

The protein resides in the secreted. The protein is Turripeptide gsp9a of Gemmula speciosa (Splendid gem-turris).